The following is a 327-amino-acid chain: GMP reductase (327 aa).

Residue cysteine 176 is the Thioimidate intermediate of the active site. 205 to 228 (IIADGGIRTHGDIAKSIRFGASMV) is an NADP(+) binding site.

This sequence belongs to the IMPDH/GMPR family. GuaC type 2 subfamily.

The catalysed reaction is IMP + NH4(+) + NADP(+) = GMP + NADPH + 2 H(+). Catalyzes the irreversible NADPH-dependent deamination of GMP to IMP. It functions in the conversion of nucleobase, nucleoside and nucleotide derivatives of G to A nucleotides, and in maintaining the intracellular balance of A and G nucleotides. The sequence is that of GMP reductase from Streptococcus pyogenes serotype M5 (strain Manfredo).